A 463-amino-acid polypeptide reads, in one-letter code: Bifunctional protein GlmU (463 aa).

The tract at residues Met-1–Arg-228 is pyrophosphorylase. Residues Leu-10 to Gly-13, Lys-24, Gln-75, Gly-80 to Thr-81, Tyr-102 to Asp-104, Gly-138, Glu-153, Asn-168, and Asn-226 contribute to the UDP-N-acetyl-alpha-D-glucosamine site. A Mg(2+)-binding site is contributed by Asp-104. Residue Asn-226 coordinates Mg(2+). Residues Val-229–Ala-249 form a linker region. The interval Gly-250–Ala-463 is N-acetyltransferase. Arg-332 and Lys-350 together coordinate UDP-N-acetyl-alpha-D-glucosamine. His-362 (proton acceptor) is an active-site residue. 2 residues coordinate UDP-N-acetyl-alpha-D-glucosamine: Tyr-365 and Asn-376. Residues Ala-379, Asn-385–Tyr-386, Ser-404, Ala-422, and Arg-439 contribute to the acetyl-CoA site. A disordered region spans residues Val-437–Ala-463. Over residues Gln-453–Ala-463 the composition is skewed to basic and acidic residues.

It in the N-terminal section; belongs to the N-acetylglucosamine-1-phosphate uridyltransferase family. In the C-terminal section; belongs to the transferase hexapeptide repeat family. As to quaternary structure, homotrimer. It depends on Mg(2+) as a cofactor.

The protein resides in the cytoplasm. The catalysed reaction is alpha-D-glucosamine 1-phosphate + acetyl-CoA = N-acetyl-alpha-D-glucosamine 1-phosphate + CoA + H(+). The enzyme catalyses N-acetyl-alpha-D-glucosamine 1-phosphate + UTP + H(+) = UDP-N-acetyl-alpha-D-glucosamine + diphosphate. The protein operates within nucleotide-sugar biosynthesis; UDP-N-acetyl-alpha-D-glucosamine biosynthesis; N-acetyl-alpha-D-glucosamine 1-phosphate from alpha-D-glucosamine 6-phosphate (route II): step 2/2. It functions in the pathway nucleotide-sugar biosynthesis; UDP-N-acetyl-alpha-D-glucosamine biosynthesis; UDP-N-acetyl-alpha-D-glucosamine from N-acetyl-alpha-D-glucosamine 1-phosphate: step 1/1. Its pathway is bacterial outer membrane biogenesis; LPS lipid A biosynthesis. Catalyzes the last two sequential reactions in the de novo biosynthetic pathway for UDP-N-acetylglucosamine (UDP-GlcNAc). The C-terminal domain catalyzes the transfer of acetyl group from acetyl coenzyme A to glucosamine-1-phosphate (GlcN-1-P) to produce N-acetylglucosamine-1-phosphate (GlcNAc-1-P), which is converted into UDP-GlcNAc by the transfer of uridine 5-monophosphate (from uridine 5-triphosphate), a reaction catalyzed by the N-terminal domain. The polypeptide is Bifunctional protein GlmU (Alkalilimnicola ehrlichii (strain ATCC BAA-1101 / DSM 17681 / MLHE-1)).